The chain runs to 312 residues: D-alanine--D-alanine ligase (312 aa).

Positions 103 to 303 (KQQLVPHGIR…YADLVQAIVD (201 aa)) constitute an ATP-grasp domain. Position 130-186 (130-186 (MPRPYVLKPVNEGSSVGVAIIKERDNHGVPIHRDSHGPWQTFATLLAEPFIRGRELT)) interacts with ATP. 3 residues coordinate Mg(2+): D254, E270, and N272.

It belongs to the D-alanine--D-alanine ligase family. The cofactor is Mg(2+). Mn(2+) serves as cofactor.

Its subcellular location is the cytoplasm. It carries out the reaction 2 D-alanine + ATP = D-alanyl-D-alanine + ADP + phosphate + H(+). Its pathway is cell wall biogenesis; peptidoglycan biosynthesis. Functionally, cell wall formation. The polypeptide is D-alanine--D-alanine ligase (Rhizorhabdus wittichii (strain DSM 6014 / CCUG 31198 / JCM 15750 / NBRC 105917 / EY 4224 / RW1) (Sphingomonas wittichii)).